The following is a 623-amino-acid chain: Leucine aminopeptidase 2 (623 aa).

A peptide is bound by residues 140–142 (QLE) and 266–271 (PYGGME). His295 contributes to the Zn(2+) binding site. The active-site Proton acceptor is Glu296. Positions 299 and 318 each coordinate Zn(2+). Catalysis depends on Tyr382, which acts as the Proton donor.

It belongs to the peptidase M1 family. The cofactor is Zn(2+).

It is found in the cytoplasm. Its subcellular location is the nucleus. The catalysed reaction is an epoxide + H2O = an ethanediol. In terms of biological role, aminopeptidase that preferentially cleaves di- and tripeptides. Also has low epoxide hydrolase activity (in vitro). Can hydrolyze the epoxide leukotriene LTA(4) but it forms preferentially 5,6-dihydroxy-7,9,11,14-eicosatetraenoic acid rather than the cytokine leukotriene B(4) as the product compared to the homologous mammalian enzyme (in vitro). This chain is Leucine aminopeptidase 2, found in Eremothecium gossypii (strain ATCC 10895 / CBS 109.51 / FGSC 9923 / NRRL Y-1056) (Yeast).